Reading from the N-terminus, the 323-residue chain is Aldo-keto reductase family 1 member C1 (323 aa).

NADP(+)-binding positions include 20 to 24 (GFGTY) and D50. Y24 is a binding site for substrate. The active-site Proton donor is the Y55. H117 serves as a coordination point for substrate. NADP(+)-binding positions include 166-167 (SN), Q190, and 216-222 (YSALGSH). Positions 222 and 227 each coordinate substrate. Position 270–280 (270–280 (KSYNEQRIRQN)) interacts with NADP(+).

Belongs to the aldo/keto reductase family. Monomer.

It is found in the cytoplasm. The protein localises to the cytosol. It catalyses the reaction a 3alpha-hydroxysteroid + NADP(+) = a 3-oxosteroid + NADPH + H(+). The catalysed reaction is a 3alpha-hydroxysteroid + NAD(+) = a 3-oxosteroid + NADH + H(+). The enzyme catalyses (17R,20S)-17,20-dihydroxypregn-4-en-3-one + NADP(+) = 17alpha-hydroxyprogesterone + NADPH + H(+). It carries out the reaction (17R,20S)-17,20-dihydroxypregn-4-en-3-one + NAD(+) = 17alpha-hydroxyprogesterone + NADH + H(+). It catalyses the reaction (20S)-hydroxypregn-4-en-3-one + NADP(+) = progesterone + NADPH + H(+). The catalysed reaction is (20S)-hydroxypregn-4-en-3-one + NAD(+) = progesterone + NADH + H(+). The enzyme catalyses (1R,2R)-1,2-dihydrobenzene-1,2-diol + NADP(+) = catechol + NADPH + H(+). It carries out the reaction (S)-indan-1-ol + NAD(+) = indan-1-one + NADH + H(+). It catalyses the reaction (S)-indan-1-ol + NADP(+) = indan-1-one + NADPH + H(+). The catalysed reaction is 5alpha-androstane-3alpha,17beta-diol + NADP(+) = 17beta-hydroxy-5alpha-androstan-3-one + NADPH + H(+). The enzyme catalyses 5alpha-androstane-3beta,17beta-diol + NADP(+) = 17beta-hydroxy-5alpha-androstan-3-one + NADPH + H(+). It carries out the reaction 5alpha-androstane-3alpha,17beta-diol + NAD(+) = 17beta-hydroxy-5alpha-androstan-3-one + NADH + H(+). It catalyses the reaction 17beta-hydroxy-5alpha-androstan-3-one + NADP(+) = 5alpha-androstan-3,17-dione + NADPH + H(+). The catalysed reaction is androsterone + NADP(+) = 5alpha-androstan-3,17-dione + NADPH + H(+). The enzyme catalyses androsterone + NADPH + H(+) = 5alpha-androstane-3alpha,17beta-diol + NADP(+). It carries out the reaction 5alpha-androstane-3alpha,17beta-diol + NAD(+) = androsterone + NADH + H(+). It catalyses the reaction 17beta-estradiol + NADP(+) = estrone + NADPH + H(+). The catalysed reaction is 17beta-estradiol + NAD(+) = estrone + NADH + H(+). The enzyme catalyses testosterone + NADP(+) = androst-4-ene-3,17-dione + NADPH + H(+). It carries out the reaction 20alpha-hydroxy-5beta-pregnan-3-one + NADP(+) = 5beta-pregnan-3,20-dione + NADPH + H(+). It catalyses the reaction 3beta-hydroxy-5beta-pregnane-20-one + NADP(+) = 5beta-pregnan-3,20-dione + NADPH + H(+). The catalysed reaction is 3beta-hydroxy-5beta-pregnane-20-one + NADPH + H(+) = 3beta,20alpha-dihydroxy-5beta-pregnane + NADP(+). The enzyme catalyses (3beta,5alpha,17beta)-3-hydroxyandrostan-17-yl sulfate + NADP(+) = 5alpha-dihydrotestosterone sulfate + NADPH + H(+). It participates in steroid metabolism. Functionally, cytosolic aldo-keto reductase that catalyzes the NADH and NADPH-dependent reduction of ketosteroids to hydroxysteroids. Most probably acts as a reductase in vivo since the oxidase activity measured in vitro is inhibited by physiological concentrations of NADPH. Displays a broad positional specificity acting on positions 3, 17 and 20 of steroids and regulates the metabolism of hormones like estrogens and androgens. May also reduce conjugated steroids such as 5alpha-dihydrotestosterone sulfate. Displays affinity for bile acids. This chain is Aldo-keto reductase family 1 member C1 (AKR1C1), found in Pongo abelii (Sumatran orangutan).